Here is an 80-residue protein sequence, read N- to C-terminus: MCGYYGNYYGGRGYGCCGYGGLGYGYGGLGCGLGSYYGCGYRRLGCGYGCGYGYGYGSRSLCGCGYGYGSGYGSGFGYYY.

Belongs to the KRTAP type 6 family. In terms of assembly, interacts with hair keratins.

Functionally, in the hair cortex, hair keratin intermediate filaments are embedded in an interfilamentous matrix, consisting of hair keratin-associated proteins (KRTAP), which are essential for the formation of a rigid and resistant hair shaft through their extensive disulfide bond cross-linking with abundant cysteine residues of hair keratins. The matrix proteins include the high-sulfur and high-glycine-tyrosine keratins. The chain is Keratin-associated protein 6-1 (KRTAP6-1) from Oryctolagus cuniculus (Rabbit).